We begin with the raw amino-acid sequence, 179 residues long: tRNA (cytidine(56)-2'-O)-methyltransferase (179 aa).

Residues Leu-82, 112-116, and 130-137 contribute to the S-adenosyl-L-methionine site; these read GAEKV and VGNQPHSE.

Belongs to the aTrm56 family. As to quaternary structure, homodimer.

The protein localises to the cytoplasm. The catalysed reaction is cytidine(56) in tRNA + S-adenosyl-L-methionine = 2'-O-methylcytidine(56) in tRNA + S-adenosyl-L-homocysteine + H(+). Functionally, specifically catalyzes the AdoMet-dependent 2'-O-ribose methylation of cytidine at position 56 in tRNAs. The sequence is that of tRNA (cytidine(56)-2'-O)-methyltransferase from Methanococcus maripaludis (strain DSM 14266 / JCM 13030 / NBRC 101832 / S2 / LL).